The sequence spans 109 residues: COX assembly mitochondrial protein 2 (109 aa).

The 45-residue stretch at 10-54 folds into the CHCH domain; it reads FHSCLDFINALDKCHQKEYYKRIFGLCNNEKDALNKCLKEASLNN. 2 short sequence motifs (cx9C motif) span residues 13–23 and 36–46; these read CLDFINALDKC and CNNEKDALNKC. Disulfide bonds link cysteine 13-cysteine 46 and cysteine 23-cysteine 36.

This sequence belongs to the CMC family. As to quaternary structure, interacts with CMC1.

The protein localises to the mitochondrion inner membrane. It is found in the mitochondrion intermembrane space. Functionally, required for mitochondrial cytochrome c oxidase (COX) assembly and respiration. May be involved in copper trafficking and distribution to mitochondrial COX and SOD1. The protein is COX assembly mitochondrial protein 2 (CMC2) of Saccharomyces cerevisiae (strain ATCC 204508 / S288c) (Baker's yeast).